The primary structure comprises 53 residues: UPF0181 protein VC_A0569 (53 aa).

It belongs to the UPF0181 family.

This Vibrio cholerae serotype O1 (strain ATCC 39315 / El Tor Inaba N16961) protein is UPF0181 protein VC_A0569.